A 149-amino-acid polypeptide reads, in one-letter code: Small ribosomal subunit protein uS15 (149 aa).

A compositionally biased stretch (basic and acidic residues) spans 1 to 11; the sequence is MARMHSRDRGK. The segment at 1 to 25 is disordered; the sequence is MARMHSRDRGKSGSTRPPRVAPPSW.

The protein belongs to the universal ribosomal protein uS15 family. As to quaternary structure, part of the 30S ribosomal subunit.

This chain is Small ribosomal subunit protein uS15, found in Methanopyrus kandleri (strain AV19 / DSM 6324 / JCM 9639 / NBRC 100938).